The following is a 449-amino-acid chain: tRNA-2-methylthio-N(6)-dimethylallyladenosine synthase (449 aa).

The MTTase N-terminal domain maps to Lys-3–Ser-124. [4Fe-4S] cluster is bound by residues Cys-12, Cys-48, Cys-87, Cys-163, Cys-167, and Cys-170. The region spanning Lys-149–Glu-380 is the Radical SAM core domain. The TRAM domain maps to Gln-383–Pro-447.

Belongs to the methylthiotransferase family. MiaB subfamily. Monomer. [4Fe-4S] cluster serves as cofactor.

It is found in the cytoplasm. It carries out the reaction N(6)-dimethylallyladenosine(37) in tRNA + (sulfur carrier)-SH + AH2 + 2 S-adenosyl-L-methionine = 2-methylsulfanyl-N(6)-dimethylallyladenosine(37) in tRNA + (sulfur carrier)-H + 5'-deoxyadenosine + L-methionine + A + S-adenosyl-L-homocysteine + 2 H(+). Catalyzes the methylthiolation of N6-(dimethylallyl)adenosine (i(6)A), leading to the formation of 2-methylthio-N6-(dimethylallyl)adenosine (ms(2)i(6)A) at position 37 in tRNAs that read codons beginning with uridine. The chain is tRNA-2-methylthio-N(6)-dimethylallyladenosine synthase from Orientia tsutsugamushi (strain Boryong) (Rickettsia tsutsugamushi).